Consider the following 171-residue polypeptide: UPF0316 protein Exig_2248 (171 aa).

3 consecutive transmembrane segments (helical) span residues 4 to 24, 31 to 51, and 57 to 77; these read ILLILLLQLIYVPVLTLRTIM, IIAGVLGTVETLIYIFALGIV, and TVGMIVYALGFGLGILIGGFV.

It belongs to the UPF0316 family.

Its subcellular location is the cell membrane. This Exiguobacterium sibiricum (strain DSM 17290 / CCUG 55495 / CIP 109462 / JCM 13490 / 255-15) protein is UPF0316 protein Exig_2248.